A 195-amino-acid chain; its full sequence is Imidazoleglycerol-phosphate dehydratase (195 aa).

The protein belongs to the imidazoleglycerol-phosphate dehydratase family.

The protein resides in the cytoplasm. The enzyme catalyses D-erythro-1-(imidazol-4-yl)glycerol 3-phosphate = 3-(imidazol-4-yl)-2-oxopropyl phosphate + H2O. The protein operates within amino-acid biosynthesis; L-histidine biosynthesis; L-histidine from 5-phospho-alpha-D-ribose 1-diphosphate: step 6/9. In Parafrankia sp. (strain EAN1pec), this protein is Imidazoleglycerol-phosphate dehydratase.